A 2477-amino-acid polypeptide reads, in one-letter code: Non-reducing polyketide synthase mapC (2477 aa).

An N-terminal acylcarrier protein transacylase domain (SAT) region spans residues 14–269 (LLFGPQCSEI…HQQTHREGIQ (256 aa)). Positions 403–820 (MPPIAITGMA…GSNAALIVRD (418 aa)) constitute a Ketosynthase family 3 (KS3) domain. Residues C568, H703, and H742 each act as for beta-ketoacyl synthase activity in the active site. Residues 930–1233 (LCFGGQNGVT…HRVNLDGSDG (304 aa)) form a malonyl-CoA:ACP transacylase (MAT) domain region. The active-site For acyl/malonyl transferase activity is the S1017. Positions 1302–1435 (QERAGLLRKL…GSVSLCNERS (134 aa)) are N-terminal hotdog fold. In terms of domain architecture, PKS/mFAS DH spans 1302–1612 (QERAGLLRKL…FMSVSIRSLT (311 aa)). Positions 1307–1611 (LLRKLSDGPE…RFMSVSIRSL (305 aa)) are product template (PT) domain. The active-site Proton acceptor; for dehydratase activity is the H1336. Residues 1461-1612 (ASNGLKGSTV…FMSVSIRSLT (152 aa)) form a C-terminal hotdog fold region. Residue D1518 is the Proton donor; for dehydratase activity of the active site. Positions 1651-1725 (DSDLVAVQEM…GLTEHIFPGH (75 aa)) constitute a Carrier domain. S1685 is modified (O-(pantetheine 4'-phosphoryl)serine). Positions 1882 to 2117 (PYALEHDLLQ…GFEWVGWTNN (236 aa)) are methyltransferase (CMeT) domain. Residues S2267 and D2421 each act as for thioesterase activity in the active site.

Its subcellular location is the cytoplasm. The protein localises to the cytosol. It catalyses the reaction 3 malonyl-CoA + acetyl-CoA + S-adenosyl-L-methionine + H(+) = 5-methylorsellinate + S-adenosyl-L-homocysteine + 3 CO2 + 4 CoA. It participates in secondary metabolite biosynthesis; terpenoid biosynthesis. In terms of biological role, non-reducing polyketide synthase; part of the gene cluster that mediates the biosynthesis of mycophenolic acid (MPA), the first isolated antibiotic natural product in the world obtained from a culture of Penicillium brevicompactum in 1893. MpaC catalyzes the synthesis of 5-methylorsellinic acid (5MOA) via the condensation of 1 acetyl-CoA starter unit with 3 malonyl-CoA units and one methylation step. The first step of the pathway is the synthesis of 5-methylorsellinic acid (5MOA) by the cytosolic polyketide synthase mpaC. 5MOA is then converted to the phthalide compound 5,7-dihydroxy-4,6-dimethylphthalide (DHMP) by the endoplasmic reticulum-bound cytochrome P450 monooxygenase mpaDE. MpaDE first catalyzes hydroxylation of 5-MOA to 4,6-dihydroxy-2-(hydroxymethyl)-3-methylbenzoic acid (DHMB). MpaDE then acts as a lactone synthase that catalyzes the ring closure to convert DHMB into DHMP. The next step is the prenylation of DHMP by the Golgi apparatus-associated prenyltransferase mpaA to yield farnesyl-DHMP (FDHMP). The ER-bound oxygenase mpaB then mediates the oxidative cleavage the C19-C20 double bond in FDHMP to yield FDHMP-3C via a mycophenolic aldehyde intermediate. The O-methyltransferase mpaG catalyzes the methylation of FDHMP-3C to yield MFDHMP-3C. After the cytosolic methylation of FDHMP-3C, MFDHMP-3C enters into peroxisomes probably via free diffusion due to its low molecular weight. Upon a peroxisomal CoA ligation reaction, catalyzed by a beta-oxidation component enzyme acyl-CoA ligase ACL891, MFDHMP-3C-CoA would then be restricted to peroxisomes for the following beta-oxidation pathway steps. The peroxisomal beta-oxidation machinery than converts MFDHMP-3C-CoA into MPA_CoA, via a beta-oxidation chain-shortening process. Finally mpaH acts as a peroxisomal acyl-CoA hydrolase with high substrate specificity toward MPA-CoA to release the final product MPA. The chain is Non-reducing polyketide synthase mapC from Penicillium roqueforti (strain FM164).